The sequence spans 538 residues: Phosphoenolpyruvate carboxykinase (ATP) (538 aa).

R64, Y205, and K211 together coordinate substrate. Residues K211, H230, and 246–254 contribute to the ATP site; that span reads GLSGTGKTT. Mn(2+)-binding residues include K211 and H230. Residue D267 participates in Mn(2+) binding. Residues E295, R331, 447–448, and T453 contribute to the ATP site; that span reads RI. Position 331 (R331) interacts with substrate.

It belongs to the phosphoenolpyruvate carboxykinase (ATP) family. Monomer. It depends on Mn(2+) as a cofactor.

It localises to the cytoplasm. The enzyme catalyses oxaloacetate + ATP = phosphoenolpyruvate + ADP + CO2. It functions in the pathway carbohydrate biosynthesis; gluconeogenesis. Involved in the gluconeogenesis. Catalyzes the conversion of oxaloacetate (OAA) to phosphoenolpyruvate (PEP) through direct phosphoryl transfer between the nucleoside triphosphate and OAA. The chain is Phosphoenolpyruvate carboxykinase (ATP) from Baumannia cicadellinicola subsp. Homalodisca coagulata.